The sequence spans 74 residues: Brevinin-2MT1 (74 aa).

The signal sequence occupies residues 1-22; the sequence is MFTMKKSLLVLFFLGTISLSLC. Positions 23 to 39 are cleaved as a propeptide — removed in mature form; that stretch reads EEERNADEDDGEMTEEE. A disulfide bond links cysteine 68 and cysteine 74.

It belongs to the frog skin active peptide (FSAP) family. Brevinin subfamily. In terms of tissue distribution, expressed by the skin glands.

Its subcellular location is the secreted. Its function is as follows. Antimicrobial peptide. Active against a variety of Gram-negative and Gram-positive bacterial strains. Active against fungi. Shows hemolytic activity against human erythrocytes. The protein is Brevinin-2MT1 of Amolops mantzorum (Sichuan torrent frog).